A 170-amino-acid chain; its full sequence is Large ribosomal subunit protein uL10 (170 aa).

It belongs to the universal ribosomal protein uL10 family. Part of the ribosomal stalk of the 50S ribosomal subunit. The N-terminus interacts with L11 and the large rRNA to form the base of the stalk. The C-terminus forms an elongated spine to which L12 dimers bind in a sequential fashion forming a multimeric L10(L12)X complex.

In terms of biological role, forms part of the ribosomal stalk, playing a central role in the interaction of the ribosome with GTP-bound translation factors. The chain is Large ribosomal subunit protein uL10 from Nitratiruptor sp. (strain SB155-2).